We begin with the raw amino-acid sequence, 139 residues long: Transcription antitermination protein NusB (139 aa).

This sequence belongs to the NusB family.

Functionally, involved in transcription antitermination. Required for transcription of ribosomal RNA (rRNA) genes. Binds specifically to the boxA antiterminator sequence of the ribosomal RNA (rrn) operons. This Erwinia tasmaniensis (strain DSM 17950 / CFBP 7177 / CIP 109463 / NCPPB 4357 / Et1/99) protein is Transcription antitermination protein NusB.